The primary structure comprises 223 residues: Protein disulfide-isomerase-like protein EhSep2 (223 aa).

Residues 1–17 (MALRSLTLLCAAAGASA) form the signal peptide. Residues 18–125 (GAIELTPDNF…DELKKFAENE (108 aa)) enclose the Thioredoxin domain. Sec47 is a non-standard amino acid (selenocysteine). Residues 155 to 201 (EKRTEMLETLKKELADAESTHEALLKELQATYKESMDKLEKLKEESA) are a coiled coil. Residues 201 to 223 (APKIKLLKAATPAPKAEGAKDEV) are disordered. Positions 203–216 (KIKLLKAATPAPKA) are enriched in low complexity. A Prevents secretion from ER motif is present at residues 220–223 (KDEV).

The protein belongs to the protein disulfide isomerase family.

The protein resides in the endoplasmic reticulum lumen. The sequence is that of Protein disulfide-isomerase-like protein EhSep2 (SEP2) from Emiliania huxleyi (Coccolithophore).